A 349-amino-acid chain; its full sequence is MCASFSPTLDSRSRQLLRTLISCYIQNGEPVGSKTLAQQAGLDISPATIRNILADLEELGLLNSPHTSAGRVPTAHGYRMFVDSLVQMQPPSEDDIRRLRVEMAGGGTQALLGNASEILSAMTHFVGVVSAPRREQFVFRHIDFVPLDARQIMAILIFADNEVQNRVIEPRRVYEPGELERVSNYLNAHFIGRTLADIRTTVLCELRKAKDEMEQLLAHSLDLASQMLVPNDSEDIVVTGQTRLMALQDLSDMDRLRELFEIFASKREILQLLERTINAPGVRIFIGEETGMVSMEDISLVTAPYAAHGQVLGVLGVIGPKRMAYDRVIPLVQVVAQVLGTALEPPTMP.

The protein belongs to the HrcA family.

In terms of biological role, negative regulator of class I heat shock genes (grpE-dnaK-dnaJ and groELS operons). Prevents heat-shock induction of these operons. The protein is Heat-inducible transcription repressor HrcA of Xylella fastidiosa (strain 9a5c).